The chain runs to 247 residues: Orotidine 5'-phosphate decarboxylase (247 aa).

Residues Asp-22, Lys-44, 71–80 (DLKFHDIPNT), Thr-131, Arg-192, Gln-201, Gly-221, and Arg-222 each bind substrate. The active-site Proton donor is the Lys-73.

Belongs to the OMP decarboxylase family. Type 1 subfamily. As to quaternary structure, homodimer.

The catalysed reaction is orotidine 5'-phosphate + H(+) = UMP + CO2. It participates in pyrimidine metabolism; UMP biosynthesis via de novo pathway; UMP from orotate: step 2/2. In terms of biological role, catalyzes the decarboxylation of orotidine 5'-monophosphate (OMP) to uridine 5'-monophosphate (UMP). The protein is Orotidine 5'-phosphate decarboxylase of Pectobacterium carotovorum subsp. carotovorum (strain PC1).